Consider the following 431-residue polypeptide: MKKIEKIKRVKGELRVPSDKSITHRAFILGALASGETLVRKPLISGDTLATLEILKAIRTKVREGKEEVLIEGRNYTFLEPHDVLDAKNSGTTARIMSGVLSTQPFFSVLTGDESLKNRPMLRVVEPLREMGAKIDGREEGNKLPIAIRGGNLKGISYFNKKSSAQVKSALLLAGLRAEGMTEVVEPYLSRDHTERMLKLFGAEVITIPEERGHIVKIKGGQELQGTEVYCPADPSSAAYFAALATLAPEGEIRLKEVLLNPTRDGFYRKLIEMGGDISFENYRELSNEPMADLVVRPVDNLKPVKVSPEEVPTLIDEIPILAVLMAFADGVSEVKGAKELRYKESDRIKAIVTNLRKLGVQVEEFEDGFAIHGTKEIKGGVIETFKDHRIAMAFAVLGLVVEEEVIIDHPECVTVSYPEFWEDILKVVEF.

3-phosphoshikimate-binding residues include lysine 20, serine 21, and arginine 25. Residue lysine 20 coordinates phosphoenolpyruvate. 2 residues coordinate phosphoenolpyruvate: glycine 91 and arginine 119. 3-phosphoshikimate contacts are provided by serine 164, glutamine 166, aspartate 317, and lysine 344. Glutamine 166 is a binding site for phosphoenolpyruvate. Aspartate 317 acts as the Proton acceptor in catalysis. Arginine 348 and arginine 390 together coordinate phosphoenolpyruvate.

The protein belongs to the EPSP synthase family. Monomer.

It is found in the cytoplasm. The catalysed reaction is 3-phosphoshikimate + phosphoenolpyruvate = 5-O-(1-carboxyvinyl)-3-phosphoshikimate + phosphate. It functions in the pathway metabolic intermediate biosynthesis; chorismate biosynthesis; chorismate from D-erythrose 4-phosphate and phosphoenolpyruvate: step 6/7. Its function is as follows. Catalyzes the transfer of the enolpyruvyl moiety of phosphoenolpyruvate (PEP) to the 5-hydroxyl of shikimate-3-phosphate (S3P) to produce enolpyruvyl shikimate-3-phosphate and inorganic phosphate. The chain is 3-phosphoshikimate 1-carboxyvinyltransferase from Aquifex aeolicus (strain VF5).